A 505-amino-acid chain; its full sequence is ATP synthase subunit alpha (505 aa).

ATP is bound at residue 169 to 176; it reads GDRQTGKT.

The protein belongs to the ATPase alpha/beta chains family. In terms of assembly, F-type ATPases have 2 components, CF(1) - the catalytic core - and CF(0) - the membrane proton channel. CF(1) has five subunits: alpha(3), beta(3), gamma(1), delta(1), epsilon(1). CF(0) has three main subunits: a(1), b(2) and c(9-12). The alpha and beta chains form an alternating ring which encloses part of the gamma chain. CF(1) is attached to CF(0) by a central stalk formed by the gamma and epsilon chains, while a peripheral stalk is formed by the delta and b chains.

It localises to the cell membrane. The catalysed reaction is ATP + H2O + 4 H(+)(in) = ADP + phosphate + 5 H(+)(out). In terms of biological role, produces ATP from ADP in the presence of a proton gradient across the membrane. The alpha chain is a regulatory subunit. In Clostridium acetobutylicum (strain ATCC 824 / DSM 792 / JCM 1419 / IAM 19013 / LMG 5710 / NBRC 13948 / NRRL B-527 / VKM B-1787 / 2291 / W), this protein is ATP synthase subunit alpha.